The sequence spans 395 residues: RNA polymerase II elongation factor ELL3 (395 aa).

2 disordered regions span residues 129-177 (LTEG…SEPM) and 189-281 (PSRE…SPEE). Serine 242 bears the Phosphoserine mark. Residues 243–260 (QEGEDWGQDEDEEGDEDG) show a composition bias toward acidic residues. Positions 269-279 (SAPSASESPSP) are enriched in low complexity. In terms of domain architecture, OCEL spans 283–393 (PDYLLQYRAI…LILEFEEKNR (111 aa)).

The protein belongs to the ELL/occludin family. Component of the little elongation complex (LEC), at least composed of ELL (ELL, ELL2 or ELL3), ZC3H8, ICE1 and ICE2. Component of the super elongation complex (SEC), at least composed of EAF1, EAF2, CDK9, MLLT3/AF9, AFF (AFF1 or AFF4), the P-TEFb complex and ELL (ELL, ELL2 or ELL3). Interacts with AFF4. As to expression, actively expressed in embryonic stem cells (ES cells), while it is weakly expressed in differentiated cells.

It is found in the nucleus. Its function is as follows. Enhancer-binding elongation factor that specifically binds enhancers in embryonic stem cells (ES cells), marks them, and is required for their future activation during stem cell specification. Elongation factor component of the super elongation complex (SEC), a complex required to increase the catalytic rate of RNA polymerase II transcription by suppressing transient pausing by the polymerase at multiple sites along the DNA. Component of the little elongation complex (LEC), a complex required to regulate small nuclear RNA (snRNA) gene transcription by RNA polymerase II and III. Does not only bind to enhancer regions of active genes, but also marks the enhancers that are in a poised or inactive state in ES cells and is required for establishing proper RNA polymerase II occupancy at developmentally regulated genes in a cohesin-dependent manner. Probably required for priming developmentally regulated genes for later recruitment of the super elongation complex (SEC), for transcriptional activation during differentiation. Required for recruitment of P-TEFb within SEC during differentiation. Probably preloaded on germ cell chromatin, suggesting that it may prime gene activation by marking enhancers as early as in the germ cells. Promoting epithelial-mesenchymal transition (EMT). This Mus musculus (Mouse) protein is RNA polymerase II elongation factor ELL3 (Ell3).